A 359-amino-acid chain; its full sequence is UPF0283 membrane protein Atu1356 (359 aa).

Residues 1–39 (MKAPTQNDPQTRRPAAFTLETEEAARPSATQKRAPRSFD) are disordered. 2 consecutive transmembrane segments (helical) span residues 75 to 95 (FGKL…GLWA) and 108 to 128 (WLGY…LALV).

It belongs to the UPF0283 family.

The protein localises to the cell inner membrane. The sequence is that of UPF0283 membrane protein Atu1356 from Agrobacterium fabrum (strain C58 / ATCC 33970) (Agrobacterium tumefaciens (strain C58)).